Reading from the N-terminus, the 338-residue chain is Fructose-1,6-bisphosphatase class 1 (338 aa).

4 residues coordinate Mg(2+): Glu91, Asp113, Leu115, and Asp116. Residues 116-119, Asn211, Tyr244, and Lys277 each bind substrate; that span reads DGSS. Glu283 provides a ligand contact to Mg(2+).

It belongs to the FBPase class 1 family. Homotetramer. The cofactor is Mg(2+).

The protein localises to the cytoplasm. The catalysed reaction is beta-D-fructose 1,6-bisphosphate + H2O = beta-D-fructose 6-phosphate + phosphate. It participates in carbohydrate biosynthesis; gluconeogenesis. This Oleidesulfovibrio alaskensis (strain ATCC BAA-1058 / DSM 17464 / G20) (Desulfovibrio alaskensis) protein is Fructose-1,6-bisphosphatase class 1.